The chain runs to 193 residues: Cerebellin-1 (193 aa).

An N-terminal signal peptide occupies residues 1 to 21 (MLGVLELLLLGAAWLAGPARG). An N-linked (GlcNAc...) asparagine glycan is attached at Asn23. The interval 34–38 (CLVVC) is essential for interaction with NRXN1 and linker of two C1q trimers into disulfide-linked hexamers. Positions 57–193 (SGSAKVAFSA…TFSGFLVFPL (137 aa)) constitute a C1q domain. A necessary for interaction with CBLN3, and homotrimerization region spans residues 62-193 (VAFSAIRSTN…TFSGFLVFPL (132 aa)). A glycan (N-linked (GlcNAc...) asparagine) is linked at Asn79. Positions 122 to 147 (YNRQTIQVSLMLNGWPVISAFAGDQD) are essential for interaction with GRID2.

Homohexamer; disulfide-linked homotrimers. The trimers associate via N-terminal cysteine residues to form disulfide-linked hexamers. May form oligomers with CBLN2, CBLN3 AND CBLN4 prior to secretion. Once secreted, does not interact with other CBLN family members. Interacts with GRID1. Interacts with NRXN1 and NRXN2 long (alpha) and short (beta) isoforms produced by alternative promoter usage. Competes with NLGN1 for NRXN1-binding. Weakly interacts with NRXN3 short isoform and not at all with NRXN3 long isoform. Interacts (via C1q domain) with GRID2; GRID2-binding is calcium-independent; CBLN1 hexamers anchor GRID2 N-terminal domain dimers to monomeric NRXN1 isoform beta; promotes synaptogenesis and mediates the D-Serine-dependent long term depression signals and AMPA receptor endocytosis. Interacts with OTOL1. Post-translationally, the proteolytic processing to yield cerebellin seems to occur either prior to the secretion by presynaptic neurons and subsequent oligomerization or in some other location after release of the mature protein. In terms of processing, sialoglycoprotein. As to expression, in the Purkinje cells postsynaptic structures. In the cerebellum, cerebellin is much less abundant than [des-Ser1]-cerebellin.

It localises to the secreted. The protein localises to the postsynaptic cell membrane. Functionally, required for synapse integrity and synaptic plasticity. During cerebellar synapse formation, essential for the matching and maintenance of pre- and post-synaptic elements at parallel fiber-Purkinje cell synapses, the establishment of the proper pattern of climbing fiber-Purkinje cell innervation, and induction of long-term depression at parallel fiber-Purkinje cell synapses. Plays a role as a synaptic organizer that acts bidirectionally on both pre- and post-synaptic components. On the one hand induces accumulation of synaptic vesicles in the pre-synaptic part by binding with NRXN1 and in other hand induces clustering of GRID2 and its associated proteins at the post-synaptic site through association of GRID2. NRXN1-CBLN1-GRID2 complex directly induces parallel fiber protrusions that encapsulate spines of Purkinje cells leading to accumulation of GRID2 and synaptic vesicles. Required for CBLN3 export from the endoplasmic reticulum and secretion. NRXN1-CBLN1-GRID2 complex mediates the D-Serine-dependent long term depression signals and AMPA receptor endocytosis. Essential for long-term maintenance but not establishment of excitatory synapses. Inhibits the formation and function of inhibitory GABAergic synapses in cerebellar Purkinje cells. Its function is as follows. The cerebellin peptide exerts neuromodulatory functions. Directly stimulates norepinephrine release via the adenylate cyclase/PKA-dependent signaling pathway; and indirectly enhances adrenocortical secretion in vivo, through a paracrine mechanism involving medullary catecholamine release. The chain is Cerebellin-1 (CBLN1) from Homo sapiens (Human).